A 161-amino-acid polypeptide reads, in one-letter code: MYRIGNGIDFHKLEINLNRPLILGGIECESEFALVGHSDADIILHAISDAILGALALGDIGQYFPDTDPSLKNIDSKIILVKCLELMKEKNFDLVNIDCTVIGERPKIAPLKDRITKSLSNLLNLPLDCISVKATTTEKMGALGRQEGIGTFCSILLEKRS.

Residues Asp-9 and His-11 each contribute to the a divalent metal cation site. Residues 9–11 and 37–38 each bind 4-CDP-2-C-methyl-D-erythritol 2-phosphate; these read DFH and HS. Residue His-45 participates in a divalent metal cation binding. 4-CDP-2-C-methyl-D-erythritol 2-phosphate-binding positions include 59–61, 64–68, 135–138, and Arg-145; these read DIG, FPDTD, and TTTE.

The protein belongs to the IspF family. As to quaternary structure, homotrimer. Requires a divalent metal cation as cofactor.

The catalysed reaction is 4-CDP-2-C-methyl-D-erythritol 2-phosphate = 2-C-methyl-D-erythritol 2,4-cyclic diphosphate + CMP. It participates in isoprenoid biosynthesis; isopentenyl diphosphate biosynthesis via DXP pathway; isopentenyl diphosphate from 1-deoxy-D-xylulose 5-phosphate: step 4/6. Functionally, involved in the biosynthesis of isopentenyl diphosphate (IPP) and dimethylallyl diphosphate (DMAPP), two major building blocks of isoprenoid compounds. Catalyzes the conversion of 4-diphosphocytidyl-2-C-methyl-D-erythritol 2-phosphate (CDP-ME2P) to 2-C-methyl-D-erythritol 2,4-cyclodiphosphate (ME-CPP) with a corresponding release of cytidine 5-monophosphate (CMP). The protein is 2-C-methyl-D-erythritol 2,4-cyclodiphosphate synthase of Leptospira interrogans serogroup Icterohaemorrhagiae serovar copenhageni (strain Fiocruz L1-130).